Consider the following 102-residue polypeptide: Gonadotropin subunit beta-1 (102 aa).

Intrachain disulfides connect cysteine 8–cysteine 51, cysteine 20–cysteine 65, cysteine 31–cysteine 77, cysteine 35–cysteine 79, and cysteine 82–cysteine 89. N-linked (GlcNAc...) asparagine glycosylation is present at asparagine 12.

Belongs to the glycoprotein hormones subunit beta family. As to quaternary structure, heterodimer of an alpha and a beta chain.

Its subcellular location is the secreted. In terms of biological role, involved in gametogenesis and steroidogenesis. This Thunnus obesus (Bigeye tuna) protein is Gonadotropin subunit beta-1 (cgba).